A 900-amino-acid polypeptide reads, in one-letter code: Periodic tryptophan protein 2 (900 aa).

5 WD repeats span residues 10–47, 50–89, 91–129, 139–178, and 185–229; these read GAPY…SVTL, ETST…VLHR, TFKD…RAVL, NSDD…GVLN, and GHRD…VKMD. The tract at residues 228–284 is disordered; sequence MDESEDGHSEPPSPVTPDRADEVMVENGGGVGTELKKRKEYDGKGLESDEEGDDDDE. Over residues 261–274 the composition is skewed to basic and acidic residues; sequence ELKKRKEYDGKGLE. S275 carries the post-translational modification Phosphoserine. The span at 275 to 284 shows a compositional bias: acidic residues; it reads SDEEGDDDDE. 8 WD repeats span residues 302-341, 344-384, 387-426, 429-468, 472-512, 515-554, 557-596, and 619-658; these read QASA…CIHL, ISRQ…YILK, GHYF…CFIT, EHTN…NYKT, PTPR…IKDI, GHEA…GTVE, RHNH…LMYT, and SSGK…LLRR. The segment at 684–720 is disordered; sequence PIDLIDDDNSDEEGGIDKQSRGNLGYDLPGSRPNRGR. Over residues 687 to 697 the composition is skewed to acidic residues; it reads LIDDDNSDEEG. The WD 14 repeat unit spans residues 720–759; the sequence is RPIIRTKSLSIAPTGRSFAAATTEGVLIFSIDDTFIFDPT.

Belongs to the WD repeat PWP2 family. In terms of assembly, component of the ribosomal small subunit (SSU) processome. Interacts with TBP1 in the nucleus. In terms of tissue distribution, expressed constitutively and ubiquitously; observed in seeds, seedlings, roots, leaves, stems, flowers and siliques.

The protein localises to the nucleus. The protein resides in the nucleolus. Involved in nucleolar processing of pre-18S ribosomal RNA. Plays a role early in ribosome biogenesis, especially in the maturation of 5.8S rRNA. Required for guard cell functions. This is Periodic tryptophan protein 2 from Arabidopsis thaliana (Mouse-ear cress).